Consider the following 250-residue polypeptide: Global transcriptional regulator CodY (250 aa).

A GAF domain region spans residues 1–146 (MTLLEKTRKL…GATVVGLEIL (146 aa)). Residues 194-213 (ASKIADKVGITRSVIVNALR) constitute a DNA-binding region (H-T-H motif).

Belongs to the CodY family.

Its subcellular location is the cytoplasm. In terms of biological role, DNA-binding global transcriptional regulator which is involved in the adaptive response to starvation and acts by directly or indirectly controlling the expression of numerous genes in response to nutrient availability. During rapid exponential growth, CodY is highly active and represses genes whose products allow adaptation to nutrient depletion. This Caldanaerobacter subterraneus subsp. tengcongensis (strain DSM 15242 / JCM 11007 / NBRC 100824 / MB4) (Thermoanaerobacter tengcongensis) protein is Global transcriptional regulator CodY.